A 380-amino-acid chain; its full sequence is High affinity transport system protein p37 (380 aa).

A signal peptide spans 1-26 (MLKRKKLLQGFLKFLPLIIPATIFVS). Residue C27 is the site of N-palmitoyl cysteine attachment. The S-diacylglycerol cysteine moiety is linked to residue C27. Positions 285 to 304 (NHFYTPTENNGKGDSEKSNN) are disordered.

It localises to the cell membrane. In terms of biological role, P37 is part of a high-affinity transport system. This is High affinity transport system protein p37 (p37) from Mycoplasma pneumoniae (strain ATCC 29342 / M129 / Subtype 1) (Mycoplasmoides pneumoniae).